The chain runs to 173 residues: Alpha-crystallin A chain (173 aa).

N-acetylmethionine is present on methionine 1. Residues 1 to 63 form a required for complex formation with BFSP1 and BFSP2 region; that stretch reads MDVTIQHPWF…RTVLDSGISE (63 aa). Position 6 is a deamidated glutamine; partial (glutamine 6). Residue serine 45 is modified to Phosphoserine. Glutamine 50 carries the post-translational modification Deamidated glutamine; partial. Residues 52-162 form the sHSP domain; sequence LFRTVLDSGI…GHSERAIPVS (111 aa). Lysine 70 is subject to N6-acetyllysine. Glutamine 90 bears the Deamidated glutamine; partial mark. Lysine 99 bears the N6-acetyllysine mark. Residues histidine 100, glutamate 102, and histidine 107 each contribute to the Zn(2+) site. Phosphoserine is present on serine 122. At asparagine 123 the chain carries Deamidated asparagine; partial. The tract at residues 145–173 is disordered; sequence KVQSGLDAGHSERAIPVSREEKPSSAPSS. Glutamine 147 is subject to Deamidated glutamine; partial. The span at 153–167 shows a compositional bias: basic and acidic residues; the sequence is GHSERAIPVSREEKP. Histidine 154 is a Zn(2+) binding site. O-linked (GlcNAc) serine glycosylation occurs at serine 162.

It belongs to the small heat shock protein (HSP20) family. Heteromer composed of three CRYAA and one CRYAB subunits. Inter-subunit bridging via zinc ions enhances stability, which is crucial as there is no protein turn over in the lens. Can also form homodimers and homotetramers (dimers of dimers) which serve as the building blocks of homooligomers. Within homooligomers, the zinc-binding motif is created from residues of 3 different molecules. His-100 and Glu-102 from one molecule are ligands of the zinc ion, and His-107 and His-154 residues from additional molecules complete the site with tetrahedral coordination geometry. Part of a complex required for lens intermediate filament formation composed of BFSP1, BFSP2 and CRYAA. In terms of processing, acetylation at Lys-70 may increase chaperone activity. Undergoes age-dependent proteolytical cleavage at the C-terminus.

It localises to the cytoplasm. Its subcellular location is the nucleus. Functionally, contributes to the transparency and refractive index of the lens. Acts as a chaperone, preventing aggregation of various proteins under a wide range of stress conditions. Required for the correct formation of lens intermediate filaments as part of a complex composed of BFSP1, BFSP2 and CRYAA. This chain is Alpha-crystallin A chain (CRYAA), found in Ochotona princeps (Southern American pika).